Reading from the N-terminus, the 130-residue chain is Protein ApaG (130 aa).

In terms of domain architecture, ApaG spans 3–127 (KAETRGITVT…FSLDSPHLRR (125 aa)).

This Methylorubrum populi (strain ATCC BAA-705 / NCIMB 13946 / BJ001) (Methylobacterium populi) protein is Protein ApaG.